Consider the following 371-residue polypeptide: MSDNSQKKVIVGMSGGVDSSVSAYLLQQQGYQVAGLFMKNWEEDDDEEYCSAATDLADAQAVCDKLGMELHTVNFAAEYWDNVFELFLAEYKAGRTPNPDILCNKEIKFKAFLEFAAEDLGADYIATGHYVRRQDVDGKSRLLRGLDGNKDQSYFLYTLSHEQIAQSLFPVGELEKPEVRRIAEQLDLVTAKKKDSTGICFIGERKFRDFLGRYLPAQPGPIMTVDGQLVGKHQGLMYHTLGQRKGLGIGGTKEGGDDPWYVVDKDLDSNTLLVAQGHEHPRLMSVGLVAQQLHWVDRQPVTAPFRCVVKTRYRQQDIPCTVTPLDDERVDVRFDDPVAAVTPGQSAVFYQGEICLGGGIIEQRYPLTNPA.

Residues 12-19 (GMSGGVDS) and M38 contribute to the ATP site. An interaction with target base in tRNA region spans residues 98-100 (NPD). C103 functions as the Nucleophile in the catalytic mechanism. Cysteines 103 and 200 form a disulfide. G128 provides a ligand contact to ATP. Positions 150–152 (KDQ) are interaction with tRNA. C200 acts as the Cysteine persulfide intermediate in catalysis. The segment at 312 to 313 (RY) is interaction with tRNA.

It belongs to the MnmA/TRMU family. Interacts with TusE.

Its subcellular location is the cytoplasm. The enzyme catalyses S-sulfanyl-L-cysteinyl-[protein] + uridine(34) in tRNA + AH2 + ATP = 2-thiouridine(34) in tRNA + L-cysteinyl-[protein] + A + AMP + diphosphate + H(+). Its function is as follows. Catalyzes the 2-thiolation of uridine at the wobble position (U34) of tRNA(Lys), tRNA(Glu) and tRNA(Gln), leading to the formation of s(2)U34, the first step of tRNA-mnm(5)s(2)U34 synthesis. Sulfur is provided by IscS, via a sulfur-relay system. Binds ATP and its substrate tRNAs. The protein is tRNA-specific 2-thiouridylase MnmA of Yersinia pestis bv. Antiqua (strain Antiqua).